A 505-amino-acid polypeptide reads, in one-letter code: Maturase K (505 aa).

It belongs to the intron maturase 2 family. MatK subfamily.

It is found in the plastid. The protein resides in the chloroplast. Its function is as follows. Usually encoded in the trnK tRNA gene intron. Probably assists in splicing its own and other chloroplast group II introns. In Chiococca alba (West Indian milkberry), this protein is Maturase K.